Consider the following 300-residue polypeptide: Protease HtpX homolog (300 aa).

A run of 2 helical transmembrane segments spans residues 5-25 (IFLLTLTNIAVIFLLTLFISL) and 41-61 (TLFLFSMVVGFTGSFISLAIS). His-146 contributes to the Zn(2+) binding site. The active site involves Glu-147. Residue His-150 participates in Zn(2+) binding. 2 helical membrane passes run 161 to 181 (LLQGVVNTFVVFLSRIIGFFV) and 196 to 216 (IGFYLGMFISEIVLGLLASII). Zn(2+) is bound at residue Glu-225.

This sequence belongs to the peptidase M48B family. Requires Zn(2+) as cofactor.

It is found in the cell inner membrane. In Methylacidiphilum infernorum (isolate V4) (Methylokorus infernorum (strain V4)), this protein is Protease HtpX homolog.